We begin with the raw amino-acid sequence, 394 residues long: Elongation factor Tu (394 aa).

In terms of domain architecture, tr-type G spans 10 to 204 (KPHVNIGTIG…AVDSWIPLPE (195 aa)). A G1 region spans residues 19 to 26 (GHVDHGKT). 19–26 (GHVDHGKT) contacts GTP. Residue threonine 26 coordinates Mg(2+). Positions 60–64 (GITIN) are G2. The interval 81–84 (DCPG) is G3. GTP contacts are provided by residues 81-85 (DCPGH) and 136-139 (NKCD). The tract at residues 136–139 (NKCD) is G4. Residues 174 to 176 (SGL) are G5.

The protein belongs to the TRAFAC class translation factor GTPase superfamily. Classic translation factor GTPase family. EF-Tu/EF-1A subfamily. Monomer.

It is found in the cytoplasm. It carries out the reaction GTP + H2O = GDP + phosphate + H(+). In terms of biological role, GTP hydrolase that promotes the GTP-dependent binding of aminoacyl-tRNA to the A-site of ribosomes during protein biosynthesis. This is Elongation factor Tu from Ureaplasma parvum serovar 3 (strain ATCC 27815 / 27 / NCTC 11736).